The following is a 397-amino-acid chain: CCA-adding enzyme (397 aa).

Residues G32 and R35 each coordinate ATP. Positions 32 and 35 each coordinate CTP. Mg(2+) is bound by residues D45 and D47. R116, D159, R162, R165, and R168 together coordinate ATP. 5 residues coordinate CTP: R116, D159, R162, R165, and R168.

Belongs to the tRNA nucleotidyltransferase/poly(A) polymerase family. Bacterial CCA-adding enzyme type 3 subfamily. As to quaternary structure, homodimer. The cofactor is Mg(2+).

The catalysed reaction is a tRNA precursor + 2 CTP + ATP = a tRNA with a 3' CCA end + 3 diphosphate. The enzyme catalyses a tRNA with a 3' CCA end + 2 CTP + ATP = a tRNA with a 3' CCACCA end + 3 diphosphate. In terms of biological role, catalyzes the addition and repair of the essential 3'-terminal CCA sequence in tRNAs without using a nucleic acid template. Adds these three nucleotides in the order of C, C, and A to the tRNA nucleotide-73, using CTP and ATP as substrates and producing inorganic pyrophosphate. tRNA 3'-terminal CCA addition is required both for tRNA processing and repair. Also involved in tRNA surveillance by mediating tandem CCA addition to generate a CCACCA at the 3' terminus of unstable tRNAs. While stable tRNAs receive only 3'-terminal CCA, unstable tRNAs are marked with CCACCA and rapidly degraded. This Levilactobacillus brevis (strain ATCC 367 / BCRC 12310 / CIP 105137 / JCM 1170 / LMG 11437 / NCIMB 947 / NCTC 947) (Lactobacillus brevis) protein is CCA-adding enzyme.